A 318-amino-acid chain; its full sequence is Aspartate carbamoyltransferase catalytic subunit (318 aa).

Residues R54 and T55 each coordinate carbamoyl phosphate. Position 82 (K82) interacts with L-aspartate. Carbamoyl phosphate contacts are provided by R104, H134, and Q137. L-aspartate contacts are provided by R174 and R230. Carbamoyl phosphate-binding residues include G271 and P272.

The protein belongs to the aspartate/ornithine carbamoyltransferase superfamily. ATCase family. Heterododecamer (2C3:3R2) of six catalytic PyrB chains organized as two trimers (C3), and six regulatory PyrI chains organized as three dimers (R2).

The enzyme catalyses carbamoyl phosphate + L-aspartate = N-carbamoyl-L-aspartate + phosphate + H(+). Its pathway is pyrimidine metabolism; UMP biosynthesis via de novo pathway; (S)-dihydroorotate from bicarbonate: step 2/3. Catalyzes the condensation of carbamoyl phosphate and aspartate to form carbamoyl aspartate and inorganic phosphate, the committed step in the de novo pyrimidine nucleotide biosynthesis pathway. This chain is Aspartate carbamoyltransferase catalytic subunit, found in Clavibacter michiganensis subsp. michiganensis (strain NCPPB 382).